Reading from the N-terminus, the 112-residue chain is Small ribosomal subunit protein bS6 (112 aa).

This sequence belongs to the bacterial ribosomal protein bS6 family.

Its function is as follows. Binds together with bS18 to 16S ribosomal RNA. This is Small ribosomal subunit protein bS6 from Christiangramia forsetii (strain DSM 17595 / CGMCC 1.15422 / KT0803) (Gramella forsetii).